Consider the following 494-residue polypeptide: Splicing regulatory glutamine/lysine-rich protein 1 (494 aa).

The RRM domain occupies 69 to 145 (RTVYVGNLNS…RPLKINHSNN (77 aa)). Phosphoserine occurs at positions 174 and 187. Residues 176–494 (ISAAIEPESG…ESPCSKADAV (319 aa)) form a disordered region. Positions 183–192 (ESGKSNERKG) are enriched in basic and acidic residues. Residues 193–262 (GRSRSHTRSK…KSRSRSRSRD (70 aa)) show a composition bias toward basic residues. Over residues 263 to 340 (KRKDTREKVK…DRSKETDEKR (78 aa)) the composition is skewed to basic and acidic residues. Thr348 bears the Phosphothreonine mark. Over residues 357–373 (RRSRSTSRERRRRRSRS) the composition is skewed to basic residues. Basic and acidic residues predominate over residues 404-474 (REKERDHISD…SPRTEDEGKV (71 aa)). Polar residues predominate over residues 476–486 (HNGNCQPNEES). Lys490 participates in a covalent cross-link: Glycyl lysine isopeptide (Lys-Gly) (interchain with G-Cter in SUMO2).

This sequence belongs to the splicing factor SR family. As to quaternary structure, homodimer. Binds SFRS1, SFRS2, SFRS3 and SFRS6. Interacts with the spliceosome. Interacts with SREK1IP1.

Its subcellular location is the nucleus. Functionally, participates in the regulation of alternative splicing by modulating the activity of other splice facors. Inhibits the splicing activity of SFRS1, SFRS2 and SFRS6. Augments the splicing activity of SFRS3. This chain is Splicing regulatory glutamine/lysine-rich protein 1 (Srek1), found in Mus musculus (Mouse).